The sequence spans 186 residues: High mobility group protein B4 (186 aa).

DNA-binding regions (HMG box) lie at residues 9–79 and 93–161; these read PKAN…MNYV and PRRP…ELYR. The disordered stretch occupies residues 77–98; that stretch reads NYVGKRKKRRKRDPQEPRRPPS.

This sequence belongs to the HMGB family.

It localises to the nucleus. It is found in the chromosome. The chain is High mobility group protein B4 (HMGB4) from Homo sapiens (Human).